Reading from the N-terminus, the 284-residue chain is Probable palmitoyltransferase ZDHHC24 (284 aa).

Topologically, residues 1–18 (MGQPWAAGSTDGAPAQLP) are cytoplasmic. A helical membrane pass occupies residues 19-39 (LVLTALWAAAVGLELAYVLVL). Residues 40–52 (GPGPPPLGPLARA) lie on the Extracellular side of the membrane. Residues 53–73 (LQLALAAFQLLNLLGNVGLFL) traverse the membrane as a helical segment. The Cytoplasmic segment spans residues 74-137 (RSDPSIRGVM…GRCVGFGNYR (64 aa)). One can recognise a DHHC domain in the interval 94 to 144 (AYCYQCQSQVPPRSGHCSACRVCILRRDHHCRLLGRCVGFGNYRPFLCLLL). The active-site S-palmitoyl cysteine intermediate is the C124. A helical membrane pass occupies residues 138 to 158 (PFLCLLLHAAGVLLHVSVLLG). Residues 159–166 (PALSALLR) are Extracellular-facing. A helical membrane pass occupies residues 167 to 187 (AHTPLHMAALLLLPWLMLLTG). The Cytoplasmic segment spans residues 188–201 (RVSLAQFALAFVTD). The chain crosses the membrane as a helical span at residues 202 to 222 (TCVAGALLCGAGLLFHGMLLL). Topologically, residues 223 to 284 (RGQTTWEWAR…TTADVGHTAS (62 aa)) are extracellular.

The protein belongs to the DHHC palmitoyltransferase family.

The protein localises to the membrane. It carries out the reaction L-cysteinyl-[protein] + hexadecanoyl-CoA = S-hexadecanoyl-L-cysteinyl-[protein] + CoA. In terms of biological role, probable palmitoyltransferase that could catalyze the addition of palmitate onto various protein substrates. The chain is Probable palmitoyltransferase ZDHHC24 from Homo sapiens (Human).